A 356-amino-acid polypeptide reads, in one-letter code: Homoserine O-acetyltransferase (356 aa).

Positions 50–335 constitute an AB hydrolase-1 domain; sequence NVILVCHALT…DEPYGHDAFL (286 aa). Serine 146 serves as the catalytic Nucleophile. Position 215 (arginine 215) interacts with substrate. Catalysis depends on residues aspartate 302 and histidine 331. Aspartate 332 is a binding site for substrate.

It belongs to the AB hydrolase superfamily. MetX family. In terms of assembly, homodimer.

It is found in the cytoplasm. It catalyses the reaction L-homoserine + acetyl-CoA = O-acetyl-L-homoserine + CoA. Its pathway is amino-acid biosynthesis; L-methionine biosynthesis via de novo pathway; O-acetyl-L-homoserine from L-homoserine: step 1/1. Transfers an acetyl group from acetyl-CoA to L-homoserine, forming acetyl-L-homoserine. The protein is Homoserine O-acetyltransferase of Chlorobaculum parvum (strain DSM 263 / NCIMB 8327) (Chlorobium vibrioforme subsp. thiosulfatophilum).